A 417-amino-acid polypeptide reads, in one-letter code: Gamma-glutamyl phosphate reductase (417 aa).

Belongs to the gamma-glutamyl phosphate reductase family.

The protein resides in the cytoplasm. It catalyses the reaction L-glutamate 5-semialdehyde + phosphate + NADP(+) = L-glutamyl 5-phosphate + NADPH + H(+). It participates in amino-acid biosynthesis; L-proline biosynthesis; L-glutamate 5-semialdehyde from L-glutamate: step 2/2. Catalyzes the NADPH-dependent reduction of L-glutamate 5-phosphate into L-glutamate 5-semialdehyde and phosphate. The product spontaneously undergoes cyclization to form 1-pyrroline-5-carboxylate. The chain is Gamma-glutamyl phosphate reductase from Escherichia coli O81 (strain ED1a).